Here is a 530-residue protein sequence, read N- to C-terminus: Amidase FVEG_08295 (530 aa).

Catalysis depends on charge relay system residues Lys138 and Ser214. Substrate contacts are provided by residues Ser214 and Ile235 to Ser238. Ser238 acts as the Acyl-ester intermediate in catalysis.

Belongs to the amidase family.

It catalyses the reaction a monocarboxylic acid amide + H2O = a monocarboxylate + NH4(+). Its pathway is xenobiotic degradation. Functionally, amidase; part of the Fusarium detoxification of benzoxazolinone cluster 1 (FDB1) involved in the degradation of benzoxazolinones produced by the host plant. Maize, wheat, and rye produce the 2 benzoxazinone phytoanticipins 2,4-dihy-droxy-7-methoxy-1,4-benzoxazin-3-one (DIMBOA) and 2,4-dihydroxy-1,4-benzoxazin-3-one (DIBOA) that, due to their inherent instability once released, spontaneously degrade to the more stable corresponding benzoxazolinones, 6-methoxy-2-benzoxazolinone (MBOA) and 2-benzoxazolinone (BOA), respectively. The first step in the detoxification of benzoxazolinones involves the hydrolysis of the cyclic ester bond of benzoxazolinones by the FDB1 cluster gamma-lactamase MBL1 to aminophenols. MBL1 is able to convert BOA into 2-aminophenol (2-AP), as well as MBOA into 5-methoxy-2-aminophenol (2-AMP). The FDB2 cluster N-malonyltransferase FDB2/NAT1 then metabolizes aminophenols via N-malonylation to non-toxic malonamic acids. FDB2/NAT1 converts 2-AP into N-(2-hydroxyphenyl) malonamic acid (HPMA) and 2-AMP into N-(2-hydroxy-4-methoxyphenyl) malonamic acid (HMPMA). The duplicated dienlactone hydrolases DLH1 and DLH2 may provide redundant function for hydrolyzing the lactone moiety in the BOA molecule. The roles of the amidases an other enzymes encoded by the 2 FDB clusters have not been identified so far. The sequence is that of Amidase FVEG_08295 from Gibberella moniliformis (strain M3125 / FGSC 7600) (Maize ear and stalk rot fungus).